The sequence spans 309 residues: Malate dehydrogenase (309 aa).

NAD(+) contacts are provided by residues Gly9 to Gly14 and Asp33. Positions 82 and 88 each coordinate substrate. Residues Asn95 and Val118–Asn120 contribute to the NAD(+) site. Residues Asn120 and Arg151 each contribute to the substrate site. His175 (proton acceptor) is an active-site residue.

Belongs to the LDH/MDH superfamily. MDH type 3 family.

It catalyses the reaction (S)-malate + NAD(+) = oxaloacetate + NADH + H(+). In terms of biological role, catalyzes the reversible oxidation of malate to oxaloacetate. The protein is Malate dehydrogenase of Thermomicrobium roseum (strain ATCC 27502 / DSM 5159 / P-2).